The following is a 103-amino-acid chain: Large ribosomal subunit protein bL21 (103 aa).

The protein belongs to the bacterial ribosomal protein bL21 family. In terms of assembly, part of the 50S ribosomal subunit. Contacts protein L20.

In terms of biological role, this protein binds to 23S rRNA in the presence of protein L20. The polypeptide is Large ribosomal subunit protein bL21 (Clostridium perfringens (strain ATCC 13124 / DSM 756 / JCM 1290 / NCIMB 6125 / NCTC 8237 / Type A)).